Here is a 152-residue protein sequence, read N- to C-terminus: uncharacterized protein (152 aa).

This sequence belongs to the antirestriction protein family.

This is an uncharacterized protein from Escherichia coli (strain K12).